We begin with the raw amino-acid sequence, 434 residues long: Cysteine proteinase 6 (434 aa).

A signal peptide spans 1–19 (MKVLSALCVLLVSVATAKQ). A propeptide spans 20–113 (QLSELQYRNA…SEKVFGGVQA (94 aa)) (activation peptide). 2 disulfides stabilise this stretch: Cys133–Cys178 and Cys169–Cys211. Cys136 is a catalytic residue. Asn227 carries N-linked (GlcNAc...) asparagine glycosylation. The cysteines at positions 269 and 416 are disulfide-linked. His276 is a catalytic residue. Positions 285–384 (SGSSGSQSQS…GGNSNSGDYP (100 aa)) are disordered. Positions 288–347 (SGSQSQSAGSQSQSSNNNWSESSQSQDSNSWSQSSQSQSSQDSNSWSQSSQSQGSNSFTG) are enriched in low complexity. An N-linked (GlcNAc...) asparagine glycan is attached at Asn305. Over residues 348–358 (AGTGSGSGSVS) the composition is skewed to gly residues. Residues 359 to 381 (GSGSASGSSSFSGSSNGGNSNSG) are compositionally biased toward low complexity. Asn394 is an active-site residue.

Belongs to the peptidase C1 family.

It localises to the lysosome. This chain is Cysteine proteinase 6 (cprF), found in Dictyostelium discoideum (Social amoeba).